The primary structure comprises 419 residues: ATP-dependent RNA helicase RhlB (419 aa).

The Q motif motif lies at 9–37 (QRFSDLALHRIVQQAIKEKGFEFCTPIQA). The Helicase ATP-binding domain maps to 40-217 (LPITLKGQDI…FEHMNDPQYV (178 aa)). Position 53–60 (53–60 (AQTGTGKT)) interacts with ATP. A DEAD box motif is present at residues 163–166 (DEAD). Residues 241 to 388 (KMALLMTLLE…VSQYDAKALI (148 aa)) form the Helicase C-terminal domain.

This sequence belongs to the DEAD box helicase family. RhlB subfamily. As to quaternary structure, component of the RNA degradosome, which is a multiprotein complex involved in RNA processing and mRNA degradation.

The protein resides in the cytoplasm. It catalyses the reaction ATP + H2O = ADP + phosphate + H(+). Functionally, DEAD-box RNA helicase involved in RNA degradation. Has RNA-dependent ATPase activity and unwinds double-stranded RNA. This is ATP-dependent RNA helicase RhlB from Histophilus somni (strain 2336) (Haemophilus somnus).